The chain runs to 255 residues: Pimeloyl-[acyl-carrier protein] methyl ester esterase (255 aa).

Residues Trp-18, 78–79 (SL), and 139–143 (FLALD) each bind substrate. Residue Ser-78 is the Nucleophile of the active site. Residues Asp-203 and His-233 contribute to the active site. His-233 is a substrate binding site.

The protein belongs to the AB hydrolase superfamily. Carboxylesterase BioH family. Monomer.

The protein localises to the cytoplasm. The catalysed reaction is 6-carboxyhexanoyl-[ACP] methyl ester + H2O = 6-carboxyhexanoyl-[ACP] + methanol + H(+). Its pathway is cofactor biosynthesis; biotin biosynthesis. Its function is as follows. The physiological role of BioH is to remove the methyl group introduced by BioC when the pimeloyl moiety is complete. It allows to synthesize pimeloyl-ACP via the fatty acid synthetic pathway through the hydrolysis of the ester bonds of pimeloyl-ACP esters. In Xylella fastidiosa (strain M12), this protein is Pimeloyl-[acyl-carrier protein] methyl ester esterase.